A 1041-amino-acid polypeptide reads, in one-letter code: Pre-mRNA-splicing factor ATP-dependent RNA helicase DHX16 (1041 aa).

Disordered stretches follow at residues 101–207 (EDSE…AYEE) and 371–391 (LQGDEEPSAPPTSTQAQQKES). 3 positions are modified to phosphoserine: Ser103, Ser106, and Ser107. The span at 119–130 (QKKRKKRKHLRK) shows a compositional bias: basic residues. A Phosphoserine modification is found at Ser160. A compositionally biased stretch (basic and acidic residues) spans 166 to 207 (RTERERLQDLEERDAFAERVRQRDKDRTRNVLERSDKKAYEE). Positions 381-391 (PTSTQAQQKES) are enriched in polar residues. The Helicase ATP-binding domain maps to 409–573 (LAAIANHQVL…FDDAPVFRIP (165 aa)). 422-429 (GETGSGKT) is an ATP binding site. Residues 520–523 (DEAH) carry the DEAH box motif. In terms of domain architecture, Helicase C-terminal spans 598–771 (SVLQIHVTQP…NVVLLLKSLG (174 aa)). Thr712 carries the post-translational modification Phosphothreonine.

This sequence belongs to the DEAD box helicase family. DEAH subfamily. DDX16/PRP8 sub-subfamily. In terms of assembly, component of pre-catalytic spliceosome complexes. Component of the minor spliceosome, which splices U12-type introns. Interacts with GPKOW. Interacts with TRIM6. Interacts with RIGI. As to expression, expressed in the spleen, thyroid and testis. Also expressed in the brain and cerebellum.

It localises to the nucleus. The protein resides in the nucleoplasm. It is found in the cytoplasm. The catalysed reaction is ATP + H2O = ADP + phosphate + H(+). Functionally, required for pre-mRNA splicing as a component of the spliceosome. Contributes to pre-mRNA splicing after spliceosome formation and prior to the first transesterification reaction. As a component of the minor spliceosome, involved in the splicing of U12-type introns in pre-mRNAs. Also plays a role in innate antiviral response by acting as a pattern recognition receptor sensing splicing signals in viral RNA. Mechanistically, TRIM6 promotes the interaction between unanchored 'Lys-48'-polyubiquitin chains and DHX16, leading to DHX16 interaction with RIGI and ssRNA to amplify RIGI-dependent innate antiviral immune responses. The sequence is that of Pre-mRNA-splicing factor ATP-dependent RNA helicase DHX16 (DHX16) from Homo sapiens (Human).